The following is a 2849-amino-acid chain: Immunoglobulin-like and fibronectin type III domain-containing protein 1 (2849 aa).

The disordered stretch occupies residues 82–108; sequence AGSAARPDGSGSESLAASSSWKPRRRL. A compositionally biased stretch (low complexity) spans 90 to 101; sequence GSGSESLAASSS. Positions 187–277 constitute an Ig-like 1 domain; the sequence is PDFKQKPVTL…GEATCSVRLT (91 aa). Positions 347-380 form a coiled coil; it reads IVDFRGMLRKLQEMKKEQEDRMAQYVSAIANLRH. One can recognise an Ig-like 2 domain in the interval 468 to 557; the sequence is PRVVVPLAET…SSAWLVVEGG (90 aa). 12 disordered regions span residues 577-600, 652-760, 864-924, 962-981, 1061-1103, 1221-1258, 1312-1338, 1350-1384, 1498-1523, 1654-1675, 1724-1780, and 1827-2055; these read LASEAEDAGGISIKGGQSRERGSL, VTLP…AGQR, YPGQ…DLRS, VGQREAGKPGGAEYEDIGPQ, EEEF…EGMA, TVGSVGGHGRKDSGTAGKVGEGYTEAEPGHSGGLSSWG, STVGTGNWDKARHPGAPSPHEAGSEGH, RDGSGIPEPWSAGDKTAYGEESKGLGPERTGPDGE, ETGRMESKNGVGYRGSSVGPGEMGSE, EWKDDSGFQGSLRDRGTPSEEI, QQGV…ATSH, and GAAG…SMDH. The segment covering 717–742 has biased composition (basic and acidic residues); that stretch reads HPRDRRLESRGEGQEHSEGHGSELDR. A compositionally biased stretch (polar residues) spans 866-880; it reads GQTSEGNDTQKSSLS. Over residues 1070-1084 the composition is skewed to gly residues; the sequence is RSQGKGSRGGMGLGG. The segment covering 1873 to 1882 has biased composition (polar residues); the sequence is SKPQEPQNEL. Basic and acidic residues-rich tracts occupy residues 1988–2004 and 2012–2021; these read SEDRGSLREPWSEDRRQ and SRRDTQEGRS. The Ig-like 3 domain occupies 2034–2137; that stretch reads PRSRYQPGTG…GCQHSEASLT (104 aa). Fibronectin type-III domains follow at residues 2244–2339, 2344–2443, and 2445–2540; these read PPQG…VAPE, PPSA…MRPP, and PVRD…AMPA. The Ig-like 4 domain maps to 2544–2628; sequence PRFLMDSGTK…LRNLQGKEAT (85 aa). Positions 2641-2735 constitute a Fibronectin type-III 4 domain; it reads APGSIYLQEN…TSQPWCIPRQ (95 aa). Residues 2749-2845 enclose the Ig-like 5 domain; the sequence is PDLSQKPRFL…AVSTATLIVT (97 aa).

In terms of assembly, interacts with FLNC. Interacts with KY. In terms of tissue distribution, isoform 1, isoform 3 and isoform 4 are expressed in skeletal muscle while isoform 2 is detected in both skeletal muscle and heart (at protein level).

It localises to the nucleus. It is found in the cytoplasm. The protein resides in the myofibril. Its subcellular location is the sarcomere. The protein localises to the z line. The chain is Immunoglobulin-like and fibronectin type III domain-containing protein 1 (Igfn1) from Mus musculus (Mouse).